Reading from the N-terminus, the 414-residue chain is Secernin-1 (414 aa).

Residue Ala-2 is modified to N-acetylalanine. Cys-9 is a catalytic residue.

The protein belongs to the peptidase C69 family. Secernin subfamily.

Its subcellular location is the cytoplasm. Regulates exocytosis in mast cells. Increases both the extent of secretion and the sensitivity of mast cells to stimulation with calcium. The polypeptide is Secernin-1 (SCRN1) (Homo sapiens (Human)).